The following is a 574-amino-acid chain: Enolase 4 (574 aa).

Basic and acidic residues predominate over residues 165–175 (EKERRQMEREA). Positions 165 to 221 (EKERRQMEREASPMPLQPEPSPVTSPAPGKKKGSGKGKKAAVVEKPIPPEETPEAVV) are disordered. The span at 179 to 189 (PLQPEPSPVTS) shows a compositional bias: pro residues. The segment covering 193-203 (GKKKGSGKGKK) has biased composition (basic residues). E287 lines the substrate pocket. K467 functions as the Proton acceptor in the catalytic mechanism. K518 contacts substrate.

Belongs to the enolase family.

The catalysed reaction is (2R)-2-phosphoglycerate = phosphoenolpyruvate + H2O. Its pathway is carbohydrate degradation; glycolysis; pyruvate from D-glyceraldehyde 3-phosphate: step 4/5. The chain is Enolase 4 (eno4) from Xenopus tropicalis (Western clawed frog).